A 609-amino-acid chain; its full sequence is Cationic amino acid transporter 3, mitochondrial (609 aa).

The N-terminal 14 residues, Met1–Asp14, are a transit peptide targeting the mitochondrion. Transmembrane regions (helical) follow at residues Leu38–Val58, Ala66–Ala86, Ile104–Ile124, Ile161–Gly181, Gly190–Leu210, Phe226–Gly246, Ile270–Val290, Ala314–Leu334, Gln361–Met381, Gly388–Val408, Ile474–Pro494, Tyr499–Ile519, Phe534–Leu554, and Gly558–Phe578.

It belongs to the amino acid-polyamine-organocation (APC) superfamily. Cationic amino acid transporter (CAT) (TC 2.A.3.3) family. Expressed in roots, stems, flowers, and leaves.

The protein resides in the mitochondrion membrane. In terms of biological role, permease involved in the transport of the cationic neutral or acidic amino acids. In Arabidopsis thaliana (Mouse-ear cress), this protein is Cationic amino acid transporter 3, mitochondrial (CAT3).